Here is a 641-residue protein sequence, read N- to C-terminus: Soluble starch synthase 1, chloroplastic/amyloplastic (641 aa).

The transit peptide at 1–113 directs the protein to the chloroplast; sequence MATAAGMGIG…DSIDKTIFVA (113 aa). The tract at residues 62–96 is disordered; the sequence is TFLVPTSTPPAPTQSPAPAPTPPPLPDSGVGEIEP. Residues 68 to 87 are compositionally biased toward pro residues; the sequence is STPPAPTQSPAPAPTPPPLP. Position 147 (Lys-147) interacts with ADP-alpha-D-glucose.

Belongs to the glycosyltransferase 1 family. Bacterial/plant glycogen synthase subfamily. Leaves and immature seeds.

It localises to the plastid. The protein localises to the chloroplast. It is found in the amyloplast. The enzyme catalyses [(1-&gt;4)-alpha-D-glucosyl](n) + ADP-alpha-D-glucose = [(1-&gt;4)-alpha-D-glucosyl](n+1) + ADP + H(+). It functions in the pathway glycan biosynthesis; starch biosynthesis. Involved in starch synthesis in endosperm amyloplasts. Plays a role in the elongation of amylopectin chains. Synthesizes preferentially amylopectin chains with a degree of polymerization (DP) of 7 to 11 by elongating chains with a DP of 4 to 7. Generates distincly chains with a DP of 8 to 12 chains from short chains with a DP of 6 to 7. The chain is Soluble starch synthase 1, chloroplastic/amyloplastic from Oryza sativa subsp. japonica (Rice).